The primary structure comprises 260 residues: Centromere protein K (260 aa).

Residues 84-173 (EEELQKVKKE…KKLMNALGEF (90 aa)) are a coiled coil.

This sequence belongs to the CENP-K/MCM22 family. In terms of assembly, component of the CENPA-HI complex, at least composed of CENPH, CENPI, CENPK, CENPL, CENPM, CENPO and CENPP.

It localises to the nucleus. It is found in the chromosome. Its subcellular location is the centromere. The protein resides in the kinetochore. Functionally, component of the CENPA-HI complex, a centromeric complex involved in assembly of kinetochore proteins, mitotic progression and chromosome segregation. This Gallus gallus (Chicken) protein is Centromere protein K (CENPK).